The chain runs to 176 residues: NAD(P)H-quinone oxidoreductase subunit 6, chloroplastic (176 aa).

The next 5 membrane-spanning stretches (helical) occupy residues 10–30 (ILVLFLGFVLLLGGLGVVLLT), 33–53 (IYSAFSLGLVLVCISLFYFLL), 60–80 (VAQLLIYVGAINVLIIFAVMF), 95–115 (IGDGFTSLVCITIVFSLMTTI), and 152–172 (FYLPFELISIILLVSLIGAIT).

It belongs to the complex I subunit 6 family. NDH is composed of at least 16 different subunits, 5 of which are encoded in the nucleus.

It is found in the plastid. It localises to the chloroplast thylakoid membrane. The catalysed reaction is a plastoquinone + NADH + (n+1) H(+)(in) = a plastoquinol + NAD(+) + n H(+)(out). The enzyme catalyses a plastoquinone + NADPH + (n+1) H(+)(in) = a plastoquinol + NADP(+) + n H(+)(out). NDH shuttles electrons from NAD(P)H:plastoquinone, via FMN and iron-sulfur (Fe-S) centers, to quinones in the photosynthetic chain and possibly in a chloroplast respiratory chain. The immediate electron acceptor for the enzyme in this species is believed to be plastoquinone. Couples the redox reaction to proton translocation, and thus conserves the redox energy in a proton gradient. The polypeptide is NAD(P)H-quinone oxidoreductase subunit 6, chloroplastic (ndhG) (Brachypodium distachyon (Purple false brome)).